Reading from the N-terminus, the 727-residue chain is Translation initiation factor IF-2, mitochondrial (727 aa).

A mitochondrion-targeting transit peptide spans 1–29 (MNQKLLKLENLLRFHTICRQVHSPSQRRL). The tr-type G domain maps to 178-346 (PRSPVVTVMG…ATIALAEILE (169 aa)). The segment at 187-194 (GHVDHGKT) is G1. 187-194 (GHVDHGKT) contributes to the GTP binding site. Residues 212-216 (GITQH) are G2. GTP is bound by residues 234-237 (DTPG) and 288-291 (NKCD). Positions 234–237 (DTPG) are G3. The G4 stretch occupies residues 288–291 (NKCD). Residues 324–326 (SAL) form a G5 region. Thr688 is subject to Phosphothreonine.

This sequence belongs to the TRAFAC class translation factor GTPase superfamily. Classic translation factor GTPase family. IF-2 subfamily. As to quaternary structure, monomer.

It localises to the mitochondrion. In terms of biological role, one of the essential components for the initiation of protein synthesis. Protects formylmethionyl-tRNA from spontaneous hydrolysis and promotes its binding to the 30S ribosomal subunits. Also involved in the hydrolysis of GTP during the formation of the 70S ribosomal complex. The sequence is that of Translation initiation factor IF-2, mitochondrial (Mtif2) from Mus musculus (Mouse).